The following is a 165-amino-acid chain: Mediator of RNA polymerase II transcription subunit 10 (165 aa).

Disordered stretches follow at residues 54-81 (SLHTRDDPTASTTAPNQYQSTNPNDPAL) and 143-165 (LRGEVDKVIQATGGKKQSERERG). The segment covering 62–77 (TASTTAPNQYQSTNPN) has biased composition (polar residues).

Belongs to the Mediator complex subunit 10 family. As to quaternary structure, component of the Mediator complex.

It localises to the nucleus. In terms of biological role, component of the Mediator complex, a coactivator involved in the regulated transcription of nearly all RNA polymerase II-dependent genes. Mediator functions as a bridge to convey information from gene-specific regulatory proteins to the basal RNA polymerase II transcription machinery. Mediator is recruited to promoters by direct interactions with regulatory proteins and serves as a scaffold for the assembly of a functional preinitiation complex with RNA polymerase II and the general transcription factors. This is Mediator of RNA polymerase II transcription subunit 10 (nut2) from Emericella nidulans (strain FGSC A4 / ATCC 38163 / CBS 112.46 / NRRL 194 / M139) (Aspergillus nidulans).